The following is a 589-amino-acid chain: Progranulin (589 aa).

The signal sequence occupies residues 1–17; that stretch reads MWVLMSWLAFAAGLVAG. Asn-38 carries an N-linked (GlcNAc...) asparagine glycan. Intrachain disulfides connect Cys-125/Cys-138 and Cys-132/Cys-148. The N-linked (GlcNAc...) asparagine glycan is linked to Asn-263. 10 disulfide bridges follow: Cys-282/Cys-294, Cys-288/Cys-304, Cys-295/Cys-312, Cys-305/Cys-319, Cys-313/Cys-326, Cys-320/Cys-333, Cys-364/Cys-376, Cys-370/Cys-386, Cys-395/Cys-408, and Cys-402/Cys-414. A glycan (N-linked (GlcNAc...) asparagine) is linked at Asn-373. A glycan (N-linked (GlcNAc...) asparagine) is linked at Asn-526.

It belongs to the granulin family. As to quaternary structure, progranulin is secreted as a homodimer. Interacts with SLPI; interaction protects progranulin from proteolysis. Interacts (via region corresponding to granulin-7 peptide) with CTSD; stabilizes CTSD and increases its proteolytic activity. Interacts (via region corresponding to granulin-7 peptide) with SORT1; this interaction mediates endocytosis and lysosome delivery of progranulin; interaction occurs at the neuronal cell surface in a stressed nervous system. Interacts with PSAP; facilitates lysosomal delivery of progranulin from the extracellular space and the biosynthetic pathway. Forms a complex with PSAP and M6PR; PSAP bridges the binding between progranulin and M6PR. Forms a complex with PSAP and SORT1; progranulin bridges the interaction between PSAP and SORT1; facilitates lysosomal targeting of PSAP via SORT1; interaction enhances PSAP uptake in primary cortical neurons. Interacts (via regions corresponding to granulin-2 and granulin-7 peptides) with GBA1; this interaction prevents aggregation of GBA1-SCARB2 complex via interaction with HSPA1A upon stress. Interacts (via region corresponding to granulin-7 peptide) with HSPA1A; mediates recruitment of HSPA1A to GBA1 and prevents GBA1 aggregation in response to stress. Post-translationally, N-glycosylated. In terms of processing, cleaved by ELANE; proteolysis is blocked by SLPI and is concentration- and time-dependent and induces CXCL8/IL-8 production; granulin-3 and granulin-4 are resistant to ELANE. Cleaved by CTSL in lysosome thus regulating the maturation and turnover of progranulin within the lysosome. In terms of tissue distribution, highly expressed at the wound site and diminishes away from the wound. Not expressed in fibroblasts and endothelial cells in intact skin. In adult brain, expressed primarily in neurons and in resting and reactive microglia. Expressed in both neurons and microglia. Highly expressed in activated microglia in response to injury. Expressed in macrophage.

It is found in the secreted. The protein localises to the lysosome. Its function is as follows. Secreted protein that acts as a key regulator of lysosomal function and as a growth factor involved in inflammation, wound healing and cell proliferation. Regulates protein trafficking to lysosomes, and also the activity of lysosomal enzymes. Also facilitates the acidification of lysosomes, causing degradation of mature CTSD by CTSB. In addition, functions as a wound-related growth factor that acts directly on dermal fibroblasts and endothelial cells to promote division, migration and the formation of capillary-like tubule structures. Also promotes epithelial cell proliferation by blocking TNF-mediated neutrophil activation preventing release of oxidants and proteases. Moreover, modulates inflammation in neurons by preserving neurons survival, axonal outgrowth and neuronal integrity. Functionally, inhibits epithelial cell proliferation and induces epithelial cells to secrete IL-8. Stabilizes CTSD through interaction with CTSD leading to maintain its aspartic-type peptidase activity. The protein is Progranulin (Grn) of Mus musculus (Mouse).